Consider the following 112-residue polypeptide: Large ribosomal subunit protein bL17 (112 aa).

The protein belongs to the bacterial ribosomal protein bL17 family. In terms of assembly, part of the 50S ribosomal subunit. Contacts protein L32.

The sequence is that of Large ribosomal subunit protein bL17 from Caldanaerobacter subterraneus subsp. tengcongensis (strain DSM 15242 / JCM 11007 / NBRC 100824 / MB4) (Thermoanaerobacter tengcongensis).